Here is a 129-residue protein sequence, read N- to C-terminus: MIYPLFRICILGAFLLGSYACLENSTQKGIEGVTLSHNSVQINNTLAKSAPFCESDALSMNYSTENMLSNNACDYTKNSSYPYIITIITKAFDNALENSLNLQANRKLYHRVGTCIQNIFYQLLLTVNY.

A signal peptide spans 1 to 20; sequence MIYPLFRICILGAFLLGSYA.

This is an uncharacterized protein from Saccharomyces cerevisiae (strain ATCC 204508 / S288c) (Baker's yeast).